The sequence spans 173 residues: Alpha-crystallin A chain (173 aa).

N-acetylmethionine is present on M1. Residues 53–164 (NFLDSSNSGM…GDRSIPVTRD (112 aa)) enclose the sHSP domain. 3 residues coordinate Zn(2+): H101, E103, and H108. The cysteines at positions 132 and 143 are disulfide-linked. The segment at 143-173 (CGPKSGGSESGRGDRSIPVTRDDKTNSTPSS) is disordered. The segment covering 153–167 (GRGDRSIPVTRDDKT) has biased composition (basic and acidic residues).

Belongs to the small heat shock protein (HSP20) family. Heteropolymer composed of three CRYAA and one CRYAB subunits. Inter-subunit bridging via zinc ions enhances stability, which is crucial as there is no protein turn over in the lens. Zinc coordination is achieved at least by His-101, Glu-103 and His-108. His-101 and Glu-103 come from the same molecule within the oligomer, while His-108 residue is provided by another molecule. Can also form homodimers and homotetramers (dimers of dimers) which serve as the building blocks of homooligomers. Part of a complex required for lens intermediate filament formation composed of BFSP1, BFSP2 and CRYAA.

The protein resides in the cytoplasm. The protein localises to the nucleus. Contributes to the transparency and refractive index of the lens. May act as a chaperone, preventing aggregation of various proteins under a wide range of stress conditions. The sequence is that of Alpha-crystallin A chain (cryaa) from Psalidodon fasciatus (Banded astyanax).